We begin with the raw amino-acid sequence, 295 residues long: Pyridoxal 5'-phosphate synthase subunit PdxS (295 aa).

D-ribose 5-phosphate is bound at residue aspartate 25. Residue lysine 82 is the Schiff-base intermediate with D-ribose 5-phosphate of the active site. Glycine 154 lines the D-ribose 5-phosphate pocket. Position 166 (arginine 166) interacts with D-glyceraldehyde 3-phosphate. D-ribose 5-phosphate-binding positions include glycine 215 and 236-237; that span reads GS.

The protein belongs to the PdxS/SNZ family. As to quaternary structure, in the presence of PdxT, forms a dodecamer of heterodimers.

It catalyses the reaction aldehydo-D-ribose 5-phosphate + D-glyceraldehyde 3-phosphate + L-glutamine = pyridoxal 5'-phosphate + L-glutamate + phosphate + 3 H2O + H(+). The protein operates within cofactor biosynthesis; pyridoxal 5'-phosphate biosynthesis. In terms of biological role, catalyzes the formation of pyridoxal 5'-phosphate from ribose 5-phosphate (RBP), glyceraldehyde 3-phosphate (G3P) and ammonia. The ammonia is provided by the PdxT subunit. Can also use ribulose 5-phosphate and dihydroxyacetone phosphate as substrates, resulting from enzyme-catalyzed isomerization of RBP and G3P, respectively. This chain is Pyridoxal 5'-phosphate synthase subunit PdxS, found in Listeria monocytogenes serotype 4b (strain CLIP80459).